The primary structure comprises 217 residues: Small ribosomal subunit protein uS3 (217 aa).

Residues 38 to 106 (IRKFIDNELK…KVHINVIEIK (69 aa)) form the KH type-2 domain.

Belongs to the universal ribosomal protein uS3 family. In terms of assembly, part of the 30S ribosomal subunit. Forms a tight complex with proteins S10 and S14.

Its function is as follows. Binds the lower part of the 30S subunit head. Binds mRNA in the 70S ribosome, positioning it for translation. The chain is Small ribosomal subunit protein uS3 from Staphylococcus epidermidis (strain ATCC 35984 / DSM 28319 / BCRC 17069 / CCUG 31568 / BM 3577 / RP62A).